The sequence spans 522 residues: MLDIVELSRLQFALTAMYHFLFVPLTLGMAFLLAIMETVYVLSGKQIYKDMTKFWGKLFGINFALGVATGLTMEFQFGTNWSYYSHYVGDIFGAPLAIEGLMAFFLESTFVGLFFFGWDRLGKVQHMCVTWLVALGSNLSALWILVANGWMQNPIASDFNFETMRMEMVSFSELVLNPVAQVKFVHTVASGYVTGAMFILGISAWYMLKGRDFAFAKRSFAIAASFGMAAVLSVIVLGDESGYEMGDVQKTKLAAIEAEWETQPAPAAFTLFGIPDQEEETNKFAIQIPYALGIIATRSVDTPVIGLKELMVQHEERIRNGMKAYSLLEQLRSGSTDQAVRDQFNSMKKDLGYGLLLKRYTPNVADATEAQIQQATKDSIPRVAPLYFAFRIMVACGFLLLAIIALSFWSVIRNRIGEKKWLLRAALYGIPLPWIAVEAGWFVAEYGRQPWAIGEVLPTAVANSSLTAGDLIFSMVLICGLYTLFLVAELFLMFKFARLGPSSLKTGRYHFEQSSTTTQPAR.

Position 1 is an N-formylmethionine (Met-1). The Cytoplasmic segment spans residues 1–22 (MLDIVELSRLQFALTAMYHFLF). Residue His-19 participates in heme b binding. Residues 23–42 (VPLTLGMAFLLAIMETVYVL) traverse the membrane as a helical segment. Over 43-94 (SGKQIYKDMTKFWGKLFGINFALGVATGLTMEFQFGTNWSYYSHYVGDIFGA) the chain is Periplasmic. The chain crosses the membrane as a helical span at residues 95–114 (PLAIEGLMAFFLESTFVGLF). Residues 115-129 (FFGWDRLGKVQHMCV) lie on the Cytoplasmic side of the membrane. A helical transmembrane segment spans residues 130–149 (TWLVALGSNLSALWILVANG). The Periplasmic segment spans residues 150-187 (WMQNPIASDFNFETMRMEMVSFSELVLNPVAQVKFVHT). Heme b is bound at residue His-186. The chain crosses the membrane as a helical span at residues 188–207 (VASGYVTGAMFILGISAWYM). At 208–219 (LKGRDFAFAKRS) the chain is on the cytoplasmic side. Residues 220 to 239 (FAIAASFGMAAVLSVIVLGD) traverse the membrane as a helical segment. The Periplasmic segment spans residues 240 to 392 (ESGYEMGDVQ…VAPLYFAFRI (153 aa)). A heme b-binding site is contributed by Met-393. The chain crosses the membrane as a helical span at residues 393-412 (MVACGFLLLAIIALSFWSVI). Topologically, residues 413–470 (RNRIGEKKWLLRAALYGIPLPWIAVEAGWFVAEYGRQPWAIGEVLPTAVANSSLTAGD) are cytoplasmic. Residues 471–490 (LIFSMVLICGLYTLFLVAEL) form a helical membrane-spanning segment. The Periplasmic segment spans residues 491–522 (FLMFKFARLGPSSLKTGRYHFEQSSTTTQPAR).

This sequence belongs to the cytochrome ubiquinol oxidase subunit 1 family. As to quaternary structure, heterodimer of subunits I and II. It depends on heme b as a cofactor. Heme d cis-diol serves as cofactor.

The protein resides in the cell inner membrane. The catalysed reaction is 2 a ubiquinol + O2(in) + 4 H(+)(in) = 2 a ubiquinone + 2 H2O(in) + 4 H(+)(out). It functions in the pathway energy metabolism; oxidative phosphorylation. In terms of biological role, a terminal oxidase that produces a proton motive force by the vectorial transfer of protons across the inner membrane. It is the component of the aerobic respiratory chain of E.coli that predominates when cells are grown at low aeration. Generates a proton motive force using protons and electrons from opposite sides of the membrane to generate H(2)O, transferring 1 proton/electron. This is Cytochrome bd-I ubiquinol oxidase subunit 1 (cydA) from Escherichia coli O6:H1 (strain CFT073 / ATCC 700928 / UPEC).